The sequence spans 264 residues: 4-oxalocrotonate decarboxylase (264 aa).

This sequence belongs to the hydratase/decarboxylase family.

The enzyme catalyses (3E)-2-oxohex-3-enedioate + H(+) = 2-oxopent-4-enoate + CO2. It functions in the pathway aromatic compound metabolism; benzoate degradation via hydroxylation. The sequence is that of 4-oxalocrotonate decarboxylase (dmpH) from Pseudomonas sp. (strain CF600).